Here is a 526-residue protein sequence, read N- to C-terminus: Na(+)/H(+) antiporter NhaB (526 aa).

A run of 12 helical transmembrane segments spans residues Ile-25 to Trp-45, Ile-52 to Ile-72, Leu-89 to Met-109, Leu-130 to Ile-164, Leu-204 to Pro-224, Ile-242 to Val-262, Ile-307 to Leu-327, Gln-350 to Ile-370, Leu-391 to Gly-411, Val-448 to Leu-468, Met-479 to Leu-499, and Trp-505 to Leu-525.

This sequence belongs to the NhaB Na(+)/H(+) (TC 2.A.34) antiporter family.

Its subcellular location is the cell inner membrane. It catalyses the reaction 2 Na(+)(in) + 3 H(+)(out) = 2 Na(+)(out) + 3 H(+)(in). Na(+)/H(+) antiporter that extrudes sodium in exchange for external protons. The sequence is that of Na(+)/H(+) antiporter NhaB from Aeromonas hydrophila subsp. hydrophila (strain ATCC 7966 / DSM 30187 / BCRC 13018 / CCUG 14551 / JCM 1027 / KCTC 2358 / NCIMB 9240 / NCTC 8049).